We begin with the raw amino-acid sequence, 441 residues long: Amino-acid acetyltransferase (441 aa).

The N-acetyltransferase domain maps to 295-434 (EQVRRATIND…QELYNYQRRS (140 aa)).

This sequence belongs to the acetyltransferase family. ArgA subfamily. In terms of assembly, homohexamer.

The protein resides in the cytoplasm. It carries out the reaction L-glutamate + acetyl-CoA = N-acetyl-L-glutamate + CoA + H(+). Its pathway is amino-acid biosynthesis; L-arginine biosynthesis; N(2)-acetyl-L-ornithine from L-glutamate: step 1/4. The protein is Amino-acid acetyltransferase of Yersinia pseudotuberculosis serotype O:1b (strain IP 31758).